The following is a 202-amino-acid chain: Protein DEHYDRATION-INDUCED 19 homolog 5 (202 aa).

The span at 88-97 shows a compositional bias: basic residues; sequence SHLLKRRKPS. Positions 88-120 are disordered; it reads SHLLKRRKPSRPSSSWPTPSNNSDPYFEGPPQY. Residues 98-112 are compositionally biased toward low complexity; that stretch reads RPSSSWPTPSNNSDP.

This sequence belongs to the Di19 family.

This is Protein DEHYDRATION-INDUCED 19 homolog 5 (DI19-5) from Oryza sativa subsp. japonica (Rice).